The sequence spans 326 residues: Diaminopimelate epimerase (326 aa).

Substrate-binding residues include Asn13 and Asn72. Cys81 acts as the Proton donor in catalysis. Substrate is bound by residues 82 to 83 (GN), Asn169, Asn205, and 223 to 224 (ER). Cys232 acts as the Proton acceptor in catalysis. 233-234 (GT) is a binding site for substrate.

It belongs to the diaminopimelate epimerase family. Homodimer.

The protein resides in the cytoplasm. The catalysed reaction is (2S,6S)-2,6-diaminopimelate = meso-2,6-diaminopimelate. Its pathway is amino-acid biosynthesis; L-lysine biosynthesis via DAP pathway; DL-2,6-diaminopimelate from LL-2,6-diaminopimelate: step 1/1. In terms of biological role, catalyzes the stereoinversion of LL-2,6-diaminopimelate (L,L-DAP) to meso-diaminopimelate (meso-DAP), a precursor of L-lysine and an essential component of the bacterial peptidoglycan. The polypeptide is Diaminopimelate epimerase (Enterococcus faecalis (strain ATCC 700802 / V583)).